Here is a 469-residue protein sequence, read N- to C-terminus: Cysteine--tRNA ligase (469 aa).

Residue C33 coordinates Zn(2+). The short motif at 35–45 is the 'HIGH' region element; sequence PTVYNLLHIGN. C214, H239, and E243 together coordinate Zn(2+). The short motif at 271-275 is the 'KMSKS' region element; that stretch reads KMSKS. An ATP-binding site is contributed by K274.

This sequence belongs to the class-I aminoacyl-tRNA synthetase family. Monomer. Zn(2+) serves as cofactor.

It localises to the cytoplasm. The catalysed reaction is tRNA(Cys) + L-cysteine + ATP = L-cysteinyl-tRNA(Cys) + AMP + diphosphate. This chain is Cysteine--tRNA ligase, found in Petrotoga mobilis (strain DSM 10674 / SJ95).